A 438-amino-acid polypeptide reads, in one-letter code: Adenylosuccinate synthetase (438 aa).

Residues G13–K19 and G41–T43 each bind GTP. The active-site Proton acceptor is D14. Mg(2+) contacts are provided by D14 and G41. IMP is bound by residues D14–K17, N39–H42, T130, R144, Q225, T240, and R312. H42 serves as the catalytic Proton donor. Substrate is bound at residue A308–R314. GTP-binding positions include R314, K340–D342, and S422–G424.

Belongs to the adenylosuccinate synthetase family. As to quaternary structure, homodimer. Mg(2+) serves as cofactor.

It is found in the cytoplasm. It carries out the reaction IMP + L-aspartate + GTP = N(6)-(1,2-dicarboxyethyl)-AMP + GDP + phosphate + 2 H(+). It participates in purine metabolism; AMP biosynthesis via de novo pathway; AMP from IMP: step 1/2. In terms of biological role, plays an important role in the de novo pathway of purine nucleotide biosynthesis. Catalyzes the first committed step in the biosynthesis of AMP from IMP. This chain is Adenylosuccinate synthetase, found in Ruthia magnifica subsp. Calyptogena magnifica.